A 383-amino-acid chain; its full sequence is MKTGLTVLIAGGGIGGLTLGVALRRAGIAFKIFERAPALLRVGAGISMQSNAMLAFRTLGVDTAVAAAGQEIQGGAILNPRGEEISSMPVSKASAEVGAPMITIHRGRLQDVLHQIVGDDNLVLGAKVEGFRDGPDGLFVRLADGREFQGDLLVGADGLRSAVRAQLLKEPSPRYSGYTSWRGVCDVSEGVRRDYTSESWGPGMRFGVVPIGEGQTYWFATATAPEGGVDHPDARTELLQRFSGWHAPIPQLIENTPSSAIMRTDIHDRVPIRQWVQGRAVLLGDAAHPMTPNMGQGGCQAVEDAVVLARCLSLEAELPAALARYQAVRVERANDFVAGSYRIGQIGQWENAFACWVREKLMRMMSSDRVDARTRRNLQFTPL.

FAD contacts are provided by residues Gly-15, Ser-47, Val-128, Asp-285, and 295-299 (GQGGC).

FAD serves as cofactor.

It catalyses the reaction aurachin C + NADH + O2 + H(+) = 4-hydroxy-2-methyl-3-oxo-4-[(2E,6E)-farnesyl]-3,4-dihydroquinoline 1-oxide + NAD(+) + H2O. The enzyme catalyses aurachin C + NADPH + O2 + H(+) = 4-hydroxy-2-methyl-3-oxo-4-[(2E,6E)-farnesyl]-3,4-dihydroquinoline 1-oxide + NADP(+) + H2O. The catalysed reaction is aurachin C + NADH + O2 + H(+) = aurachin C epoxide + NAD(+) + H2O. It carries out the reaction aurachin C + NADPH + O2 + H(+) = aurachin C epoxide + NADP(+) + H2O. It catalyses the reaction aurachin C epoxide = 2-hydroxy-1a-methyl-7a-[(2E,6E)-farnesyl]-1a,2-dihydrooxireno[2,3-b]quinolin-7(7aH)-one. The enzyme catalyses 2-hydroxy-1a-methyl-7a-[(2E,6E)-farnesyl]-1a,2-dihydrooxireno[2,3-b]quinolin-7(7aH)-one = 4-hydroxy-2-methyl-3-oxo-4-[(2E,6E)-farnesyl]-3,4-dihydroquinoline 1-oxide. Functionally, catalyzes the initial step in the conversion of aurachin C to aurachin B. Catalyzes the epoxidation of the C(2)-C(3) double bond of aurachin C, which is followed by a semipinacol rearrangement, causing migration of the farnesyl group from C(3) to C(4). Accepts both NADH and NADPH, but has a preference for NADH. The protein is Aurachin C monooxygenase/isomerase of Stigmatella aurantiaca.